A 261-amino-acid chain; its full sequence is UPF0328 protein ECU06_0100 (261 aa).

It belongs to the UPF0328 family.

The chain is UPF0328 protein ECU06_0100 from Encephalitozoon cuniculi (strain GB-M1) (Microsporidian parasite).